We begin with the raw amino-acid sequence, 527 residues long: Proline--tRNA ligase (527 aa).

This sequence belongs to the class-II aminoacyl-tRNA synthetase family. ProS type 3 subfamily. In terms of assembly, homodimer.

It is found in the cytoplasm. The enzyme catalyses tRNA(Pro) + L-proline + ATP = L-prolyl-tRNA(Pro) + AMP + diphosphate. Catalyzes the attachment of proline to tRNA(Pro) in a two-step reaction: proline is first activated by ATP to form Pro-AMP and then transferred to the acceptor end of tRNA(Pro). The polypeptide is Proline--tRNA ligase (Sphingopyxis alaskensis (strain DSM 13593 / LMG 18877 / RB2256) (Sphingomonas alaskensis)).